The following is a 1188-amino-acid chain: AT-rich interactive domain-containing protein 5B (1188 aa).

Lys130 participates in a covalent cross-link: Glycyl lysine isopeptide (Lys-Gly) (interchain with G-Cter in SUMO2). The interval 251–277 (RPRKKKPCPQRRDSFSGVKDSNNNSDG) is disordered. Position 264 is a phosphoserine (Ser264). Positions 318–410 (RADEQAFLVA…LILPYERFIK (93 aa)) constitute an ARID domain. Position 336 is an N6,N6-dimethyllysine (Lys336). The tract at residues 412 to 611 (EEDKPLPPIK…QPPLANQNET (200 aa)) is disordered. Residue Lys445 forms a Glycyl lysine isopeptide (Lys-Gly) (interchain with G-Cter in SUMO2) linkage. Basic and acidic residues predominate over residues 446 to 458 (HEIPKSKKEKENA). Residues Lys494 and Lys496 each participate in a glycyl lysine isopeptide (Lys-Gly) (interchain with G-Cter in SUMO2) cross-link. Over residues 597–609 (SFPTTQPPLANQN) the composition is skewed to polar residues. Glycyl lysine isopeptide (Lys-Gly) (interchain with G-Cter in SUMO2) cross-links involve residues Lys767, Lys774, Lys803, and Lys810. Disordered stretches follow at residues 846 to 874 (HHLH…PSHR) and 891 to 918 (DKKS…HKPT). The span at 847–866 (HLHNEQTSKYPSRDMYRESE) shows a compositional bias: basic and acidic residues. Residues Lys893, Lys916, Lys920, and Lys935 each participate in a glycyl lysine isopeptide (Lys-Gly) (interchain with G-Cter in SUMO2) cross-link. The interval 956 to 978 (RVSPMTMSGPKKYPESLSRSGKP) is disordered. Glycyl lysine isopeptide (Lys-Gly) (interchain with G-Cter in SUMO2) cross-links involve residues Lys988, Lys1000, and Lys1013. Residues 1028-1070 (ARAVSPLDPSKEVSGKEKASEQESEGSKAAHGGHSGGGSEGHK) are disordered. Ser1032 carries the phosphoserine modification. Residues 1036 to 1055 (PSKEVSGKEKASEQESEGSK) are compositionally biased toward basic and acidic residues. Glycyl lysine isopeptide (Lys-Gly) (interchain with G-Cter in SUMO2) cross-links involve residues Lys1055 and Lys1070. Residue Ser1133 is modified to Phosphoserine.

The protein belongs to the ARID5B family. Methylation at Lys-336 prevents DNA-binding. Demethylation by PHF2 promotes recruitment of the PHF2-ARID5B complex to promoters. Widely expressed, including in liver (at protein level).

The protein resides in the nucleus. In terms of biological role, transcription coactivator that binds to the 5'-AATA[CT]-3' core sequence and plays a key role in adipogenesis and liver development. Acts by forming a complex with phosphorylated PHF2, which mediates demethylation at Lys-336, leading to target the PHF2-ARID5B complex to target promoters, where PHF2 mediates demethylation of dimethylated 'Lys-9' of histone H3 (H3K9me2), followed by transcription activation of target genes. The PHF2-ARID5B complex acts as a coactivator of HNF4A in liver. Required for adipogenesis: regulates triglyceride metabolism in adipocytes by regulating expression of adipogenic genes. Overexpression leads to induction of smooth muscle marker genes, suggesting that it may also act as a regulator of smooth muscle cell differentiation and proliferation. Represses the cytomegalovirus enhancer. This is AT-rich interactive domain-containing protein 5B (ARID5B) from Homo sapiens (Human).